Here is a 553-residue protein sequence, read N- to C-terminus: CTP synthase (553 aa).

The tract at residues 1–270 is amidoligase domain; it reads MTKYVFVTGG…DRLICEELRL (270 aa). Position 13 (Ser-13) interacts with CTP. Ser-13 serves as a coordination point for UTP. Residues 14-19 and Asp-71 each bind ATP; that span reads SLGKGI. Asp-71 and Glu-144 together coordinate Mg(2+). Residues 151–153, 191–196, and Lys-227 contribute to the CTP site; these read DIE and KTKPTQ. Residues 191–196 and Lys-227 contribute to the UTP site; that span reads KTKPTQ. The Glutamine amidotransferase type-1 domain maps to 295–547; that stretch reads TIGMVGKYVD…VQAALACQQT (253 aa). Gly-356 contributes to the L-glutamine binding site. Residue Cys-383 is the Nucleophile; for glutamine hydrolysis of the active site. L-glutamine-binding positions include 384–387, Glu-407, and Arg-473; that span reads LGMQ. Catalysis depends on residues His-520 and Glu-522.

It belongs to the CTP synthase family. In terms of assembly, homotetramer.

It carries out the reaction UTP + L-glutamine + ATP + H2O = CTP + L-glutamate + ADP + phosphate + 2 H(+). It catalyses the reaction L-glutamine + H2O = L-glutamate + NH4(+). The catalysed reaction is UTP + NH4(+) + ATP = CTP + ADP + phosphate + 2 H(+). Its pathway is pyrimidine metabolism; CTP biosynthesis via de novo pathway; CTP from UDP: step 2/2. Allosterically activated by GTP, when glutamine is the substrate; GTP has no effect on the reaction when ammonia is the substrate. The allosteric effector GTP functions by stabilizing the protein conformation that binds the tetrahedral intermediate(s) formed during glutamine hydrolysis. Inhibited by the product CTP, via allosteric rather than competitive inhibition. Its function is as follows. Catalyzes the ATP-dependent amination of UTP to CTP with either L-glutamine or ammonia as the source of nitrogen. Regulates intracellular CTP levels through interactions with the four ribonucleotide triphosphates. The protein is CTP synthase of Burkholderia mallei (strain NCTC 10247).